The primary structure comprises 268 residues: Tryptophan synthase alpha chain (268 aa).

Residues Glu-49 and Asp-60 each act as proton acceptor in the active site.

This sequence belongs to the TrpA family. As to quaternary structure, tetramer of two alpha and two beta chains.

It carries out the reaction (1S,2R)-1-C-(indol-3-yl)glycerol 3-phosphate + L-serine = D-glyceraldehyde 3-phosphate + L-tryptophan + H2O. The protein operates within amino-acid biosynthesis; L-tryptophan biosynthesis; L-tryptophan from chorismate: step 5/5. Functionally, the alpha subunit is responsible for the aldol cleavage of indoleglycerol phosphate to indole and glyceraldehyde 3-phosphate. The sequence is that of Tryptophan synthase alpha chain from Escherichia coli O81 (strain ED1a).